The chain runs to 188 residues: Protein SSX1 (188 aa).

2 disordered regions span residues 1-22 (MNGD…EKRS) and 111-188 (IMPK…EDDE). Residues 20-83 (KRSKAFDDIA…KQATDFQGND (64 aa)) enclose the KRAB-related domain. Residues 115–125 (KPAEDENDSKG) are compositionally biased toward basic and acidic residues. Phosphoserine is present on Ser-123. Basic residues predominate over residues 153–170 (KRSGPKRGKHAWTHRLRE). Positions 179 to 188 (EISDPEEDDE) are enriched in acidic residues.

The protein belongs to the SSX family. In terms of tissue distribution, expressed at high level in the testis. Expressed at low level in thyroid. Not detected in tonsil, colon, lung, spleen, prostate, kidney, striated and smooth muscles. Detected in rhabdomyosarcoma and fibrosarcoma cell lines. Not detected in mesenchymal and epithelial cell lines. Expressed in testis.

It is found in the cytoplasm. The protein resides in the cytoskeleton. The protein localises to the flagellum axoneme. Its function is as follows. Could act as a modulator of transcription. Plays a role in spermatogenesis. This is Protein SSX1 (SSX1) from Homo sapiens (Human).